The chain runs to 315 residues: Tryptophan prenyltransferase ComQ (315 aa).

Residues Asp-95 and Asp-99 each coordinate Mg(2+).

This sequence belongs to the FPP/GGPP synthase family. Requires Mg(2+) as cofactor.

It localises to the cell membrane. It carries out the reaction L-tryptophyl-[protein] + (2E,6E)-farnesyl diphosphate = (2S,3R)-3-farnesyl-2,3-dihydro-2,N(alpha)-cyclo-L-tryptophyl-[protein] + diphosphate. In terms of biological role, part of a major quorum-sensing system that regulates the development of genetic competence. Involved in the maturation of the competence pheromone ComX. Acts by catalyzing the transfer of a farnesyl group on the ComX pheromone. In vitro, can also catalyze the farnesylation of single tryptophan and tryptophan derivatives. The chain is Tryptophan prenyltransferase ComQ from Bacillus subtilis subsp. natto (strain BEST195).